Reading from the N-terminus, the 213-residue chain is Probable lipid phosphate phosphatase beta (213 aa).

The next 5 helical transmembrane spans lie at 30-50 (PFLPPFVLLLLEISADFRFSF), 67-87 (VPFLLGLLFDLIFVGIVKLIF), 118-138 (VFFVAASVHFFSAAAEASMTG), 158-178 (VEVVVVVWIWATVTAISRILL), and 181-201 (HYVLDVAAGAFLGIVEALFAL).

Belongs to the PA-phosphatase related phosphoesterase family.

It localises to the membrane. This Arabidopsis thaliana (Mouse-ear cress) protein is Probable lipid phosphate phosphatase beta (LPPB).